The primary structure comprises 1056 residues: RNA cytidine acetyltransferase (1056 aa).

Residue 286 to 295 (GRGKSAALGI) coordinates ATP. Residues 433–446 (QNNTSGRESTQTAV) show a composition bias toward polar residues. The segment at 433 to 463 (QNNTSGRESTQTAVVSRDNKEKDSHLHSQSR) is disordered. Basic and acidic residues predominate over residues 449-463 (RDNKEKDSHLHSQSR). Arginine 475 is an ATP binding site. An N-acetyltransferase domain is found at 566-706 (VLLPPIDPKD…VKLRDAKTLP (141 aa)). Residues 638–640 (IAT), 645–651 (ASMGYGS), and asparagine 739 each bind acetyl-CoA. 3 positions are modified to phosphoserine: serine 1001, serine 1007, and serine 1010.

Belongs to the RNA cytidine acetyltransferase family. NAT10 subfamily. Interacts with TAN1. Associates with 90S pre-ribosomal particles.

Its subcellular location is the nucleus. The protein localises to the nucleolus. It catalyses the reaction a cytidine in 18S rRNA + acetyl-CoA + ATP + H2O = an N(4)-acetylcytidine in 18S rRNA + ADP + phosphate + CoA + H(+). It carries out the reaction a cytidine in tRNA + acetyl-CoA + ATP + H2O = an N(4)-acetylcytidine in tRNA + ADP + phosphate + CoA + H(+). Functionally, RNA cytidine acetyltransferase with specificity toward both 18S rRNA and tRNAs. Catalyzes the formation of N(4)-acetylcytidine (ac4C) at positions 1280 and 1773 in 18S rRNA. Required for early nucleolar cleavages of precursor rRNA at sites A0, A1 and A2 during 18S rRNA synthesis. Catalyzes the formation of ac4C at position 12 in serine and leucine tRNAs. Requires the tRNA-binding adapter protein TAN1 for full tRNA acetyltransferase activity but not for 18S rRNA acetylation. The chain is RNA cytidine acetyltransferase from Saccharomyces cerevisiae (strain ATCC 204508 / S288c) (Baker's yeast).